The primary structure comprises 129 residues: Follitropin subunit beta (129 aa).

Positions 1-18 (MKSVQFCFLFCCWKAICC) are cleaved as a signal peptide. 6 disulfide bridges follow: Cys21–Cys69, Cys35–Cys84, Cys38–Cys122, Cys46–Cys100, Cys50–Cys102, and Cys105–Cys112. N-linked (GlcNAc...) asparagine glycans are attached at residues Asn25 and Asn42.

This sequence belongs to the glycoprotein hormones subunit beta family. Heterodimer. The active follitropin is a heterodimer composed of an alpha chain/CGA shared with other hormones and a unique beta chain/FSHB shown here.

It localises to the secreted. Functionally, together with the alpha chain CGA constitutes follitropin, the follicle-stimulating hormone, and provides its biological specificity to the hormone heterodimer. Binds FSHR, a G protein-coupled receptor, on target cells to activate downstream signaling pathways. Follitropin is involved in follicle development and spermatogenesis in reproductive organs. The polypeptide is Follitropin subunit beta (FSHB) (Oryctolagus cuniculus (Rabbit)).